Consider the following 679-residue polypeptide: Protein hook (679 aa).

Residues 6–123 (NEMYYSLLEW…RLLQLVLGCA (118 aa)) form the Calponin-homology (CH) domain. Coiled coils occupy residues 135 to 437 (EIMC…LKCG) and 480 to 574 (QTAL…QEIL).

It belongs to the hook family. As to quaternary structure, homodimer. Interacts with microtubules via its N-terminus.

Its subcellular location is the cytoplasm. The protein resides in the cytoskeleton. It is found in the endosome. The protein localises to the synapse. Its function is as follows. Involved in endocytic trafficking by stabilizing organelles of the endocytic pathway. Probably acts as a cytoskeletal linker protein required to tether endosome vesicles to the cytoskeleton. Involved in modulation of endocytosis at stages required for down-regulation of membrane proteins that control synapse size. Not involved in synaptic vesicle recycling. Required in R7 cells for boss endocytosis into multivesicular bodies (MVBs). Has a role in regulating adult longevity. This Drosophila erecta (Fruit fly) protein is Protein hook.